The sequence spans 284 residues: Polyamine aminopropyltransferase (284 aa).

One can recognise a PABS domain in the interval 2 to 237 (ELWYTEEQTQ…GYWLFGFASK (236 aa)). Gln31 is a binding site for S-methyl-5'-thioadenosine. His62 and Asp86 together coordinate spermidine. Residues Glu106 and 137-138 (DG) each bind S-methyl-5'-thioadenosine. The active-site Proton acceptor is Asp155. Position 155-158 (155-158 (DSTD)) interacts with spermidine. Pro162 is a binding site for S-methyl-5'-thioadenosine.

This sequence belongs to the spermidine/spermine synthase family. Homodimer or homotetramer.

It is found in the cytoplasm. The catalysed reaction is S-adenosyl 3-(methylsulfanyl)propylamine + putrescine = S-methyl-5'-thioadenosine + spermidine + H(+). It participates in amine and polyamine biosynthesis; spermidine biosynthesis; spermidine from putrescine: step 1/1. Its function is as follows. Catalyzes the irreversible transfer of a propylamine group from the amino donor S-adenosylmethioninamine (decarboxy-AdoMet) to putrescine (1,4-diaminobutane) to yield spermidine. This Alkaliphilus metalliredigens (strain QYMF) protein is Polyamine aminopropyltransferase.